Here is a 415-residue protein sequence, read N- to C-terminus: MFS-type transporter FVEG_12626 (415 aa).

The segment covering 1–18 (MDPDTEQMRVEKPNHEQP) has biased composition (basic and acidic residues). The tract at residues 1 to 22 (MDPDTEQMRVEKPNHEQPKPNT) is disordered. 6 consecutive transmembrane segments (helical) span residues 27 to 47 (GGFK…VGVF), 63 to 83 (TVSW…PFVG), 93 to 113 (YLLL…SISS), 118 to 138 (YILS…YPSF), 151 to 171 (LALG…PIVV), and 178 to 198 (IGFG…LLVT). Residue N199 is glycosylated (N-linked (GlcNAc...) asparagine). The next 6 helical transmembrane spans lie at 227–247 (FILT…PITF), 264–284 (YLVS…GYIA), 290–310 (FNVS…LWLP), 318–338 (IAFA…SPAL), 354–374 (TMYA…GALI), and 386–406 (VFAG…RLYI).

This sequence belongs to the major facilitator superfamily. Monocarboxylate porter (TC 2.A.1.13) family.

Its subcellular location is the membrane. Its function is as follows. MFS-type transporter; part of the Fusarium detoxification of benzoxazolinone cluster 2 (FDB2) involved in the degradation of benzoxazolinones produced by the host plant. Maize, wheat, and rye produce the 2 benzoxazinone phytoanticipins 2,4-dihy-droxy-7-methoxy-1,4-benzoxazin-3-one (DIMBOA) and 2,4-dihydroxy-1,4-benzoxazin-3-one (DIBOA) that, due to their inherent instability once released, spontaneously degrade to the more stable corresponding benzoxazolinones, 6-methoxy-2-benzoxazolinone (MBOA) and 2-benzoxazolinone (BOA), respectively. In Gibberella moniliformis (strain M3125 / FGSC 7600) (Maize ear and stalk rot fungus), this protein is MFS-type transporter FVEG_12626.